A 225-amino-acid polypeptide reads, in one-letter code: Ribosome maturation factor RimM (225 aa).

The region spanning 144-225 (ADEFYWVDLI…RIVVDWEADY (82 aa)) is the PRC barrel domain.

The protein belongs to the RimM family. In terms of assembly, binds ribosomal protein uS19.

It is found in the cytoplasm. Its function is as follows. An accessory protein needed during the final step in the assembly of 30S ribosomal subunit, possibly for assembly of the head region. Essential for efficient processing of 16S rRNA. May be needed both before and after RbfA during the maturation of 16S rRNA. It has affinity for free ribosomal 30S subunits but not for 70S ribosomes. This chain is Ribosome maturation factor RimM, found in Burkholderia ambifaria (strain MC40-6).